Here is a 510-residue protein sequence, read N- to C-terminus: Myosin-binding protein C, cardiac-type (510 aa).

Ig-like C2-type domains lie at 177–269 (KKST…VKEP), 270–347 (PYSS…TVKT), and 378–438 (RDQA…SFIP).

This sequence belongs to the immunoglobulin superfamily. MyBP family. In terms of tissue distribution, heart.

In terms of biological role, thick filament-associated protein located in the crossbridge region of vertebrate striated muscle a bands. In vitro it binds MHC, F-actin and native thin filaments, and modifies the activity of actin-activated myosin ATPase. It may modulate muscle contraction or may play a more structural role. The polypeptide is Myosin-binding protein C, cardiac-type (Ambystoma mexicanum (Axolotl)).